Reading from the N-terminus, the 351-residue chain is Short-chain dehydrogenase sdnK (351 aa).

Residues I46, T66, E98, Y224, K228, and T268 each coordinate NADP(+). Y224 (proton donor) is an active-site residue. K228 serves as the catalytic Lowers pKa of active site Tyr.

Belongs to the short-chain dehydrogenases/reductases (SDR) family.

The protein operates within antibiotic biosynthesis. In terms of biological role, short-chain dehydrogenase; part of the gene cluster that mediates the biosynthesis of sordarin and hypoxysordarin, glycoside antibiotics with a unique tetracyclic diterpene aglycone structure. First, the geranylgeranyl diphosphate synthase sdnC constructs GGDP from farnesyl diphosphate and isopentenyl diphosphate. The diterpene cyclase sdnA then catalyzes the cyclization of GGDP to afford cycloaraneosene. Cycloaraneosene is then hydroxylated four times by the putative cytochrome P450 monooxygenases sdnB, sdnE, sdnF and sdnH to give a hydroxylated cycloaraneosene derivative such as cycloaraneosene-8,9,13,19-tetraol. Although the order of the hydroxylations is unclear, at least C8, C9 and C13 of the cycloaraneosene skeleton are hydroxylated before the sordaricin formation. Dehydration of the 13-hydroxy group of the hydroxylated cycloaraneosene derivative might be catalyzed by an unassigned hypothetical protein such as sdnG and sdnP to construct the cyclopentadiene moiety. The FAD-dependent oxidoreductase sdnN is proposed to catalyze the oxidation at C9 of the hydroxylated cycloaraneosene derivative and also catalyze the Baeyer-Villiger oxidation to give the lactone intermediate. The presumed lactone intermediate would be hydrolyzed to give an acrolein moiety and a carboxylate moiety. Then, [4+2]cycloaddition would occur between the acrolein moiety and the cyclopentadiene moiety to give sordaricin. SdnN might also be involved in the [4+2]cycloaddition after the hypothesized oxidation to accommodate the oxidized product and prompt the [4+2]cycloaddition. GDP-6-deoxy-D-altrose may be biosynthesized from GDP-D-mannose by the putative GDP-mannose-4,6-dehydratase sdnI and the short-chain dehydrogenase sdnK. The glycosyltransferase sdnJ catalyzes the attachment of 6-deoxy-D-altrose onto the 19-hydroxy group of sordaricin to give 4'-O-demethylsordarin. The methyltransferase sdnD would complete the biosynthesis of sordarin. Sordarin can be further modified into hypoxysordarin. The unique acyl chain at the 3'-hydroxy group of hypoxysordarin would be constructed by an iterative type I PKS sdnO and the trans-acting polyketide methyltransferase sdnL. SdnL would be responsible for the introduction of an alpha-methyl group of the polyketide chain. Alternatively, the beta-lactamase-like protein sdnR might be responsible for the cleavage and transfer of the polyketide chain from the PKS sdnO to sordarin. Two putative cytochrome P450 monooxygenases, sdnQ and sdnT, might catalyze the epoxidations of the polyketide chain to complete the biosynthesis of hypoxysordarin. Transcriptional regulators sdnM and sdnS are presumably encoded for the transcriptional regulation of the expression of the sdn gene cluster. This chain is Short-chain dehydrogenase sdnK, found in Sordaria araneosa (Pleurage araneosa).